Here is a 453-residue protein sequence, read N- to C-terminus: Exodeoxyribonuclease 7 large subunit (453 aa).

This sequence belongs to the XseA family. As to quaternary structure, heterooligomer composed of large and small subunits.

It localises to the cytoplasm. It catalyses the reaction Exonucleolytic cleavage in either 5'- to 3'- or 3'- to 5'-direction to yield nucleoside 5'-phosphates.. Its function is as follows. Bidirectionally degrades single-stranded DNA into large acid-insoluble oligonucleotides, which are then degraded further into small acid-soluble oligonucleotides. In Geobacter metallireducens (strain ATCC 53774 / DSM 7210 / GS-15), this protein is Exodeoxyribonuclease 7 large subunit.